The following is a 171-amino-acid chain: Protein GrpE (171 aa).

The interval 1–22 (MNHEHPDIESQQSAADAAAAAG) is disordered.

Belongs to the GrpE family. As to quaternary structure, homodimer.

The protein resides in the cytoplasm. In terms of biological role, participates actively in the response to hyperosmotic and heat shock by preventing the aggregation of stress-denatured proteins, in association with DnaK and GrpE. It is the nucleotide exchange factor for DnaK and may function as a thermosensor. Unfolded proteins bind initially to DnaJ; upon interaction with the DnaJ-bound protein, DnaK hydrolyzes its bound ATP, resulting in the formation of a stable complex. GrpE releases ADP from DnaK; ATP binding to DnaK triggers the release of the substrate protein, thus completing the reaction cycle. Several rounds of ATP-dependent interactions between DnaJ, DnaK and GrpE are required for fully efficient folding. The sequence is that of Protein GrpE from Stenotrophomonas maltophilia (strain R551-3).